The following is a 156-amino-acid chain: Small ribosomal subunit protein uS7 (156 aa).

It belongs to the universal ribosomal protein uS7 family. In terms of assembly, part of the 30S ribosomal subunit. Contacts proteins S9 and S11.

One of the primary rRNA binding proteins, it binds directly to 16S rRNA where it nucleates assembly of the head domain of the 30S subunit. Is located at the subunit interface close to the decoding center, probably blocks exit of the E-site tRNA. This is Small ribosomal subunit protein uS7 from Desulfatibacillum aliphaticivorans.